Here is a 1020-residue protein sequence, read N- to C-terminus: MKCHNPFGFRVGPVTFWTIIIYLALLVPLLWIHETVPPAPSSPTPTPGINLTEAWHDLTTITKHYHPYNSRDNERVGDYILERIAAILDRNDVNWTLEKTGARNVDVTLELSSRSSSAPSVTVFDDNLANVTWATDIGMLGDHTAGVGTYFEGTNKLVYIRGTEDEQGEWWKSGKNDVRVIGKGGVLVNAHYDSVASGYGATDDGMGCVSILQILNYFTTQGRQPKRGLLLLFNNGEEDGLLGAKAFANSPLFSFPTTFVNLEGAGAGGRAVLFRSSDEQVTKAYQKAPHPFGLVVASDGFSMGLVKSQTDFVVWDDIFGQRGLDIAFYRPRPRYHTDQDDTRHASPASLWHMLSNSIAAVKSLSDNTHTFSGQRSDGDRRKVPSGSHASKGVWFDMFGKGFAVFGLRGLFAWSLTLLIVSPLILAILVFILNRHDKLYFFSRKINVHNEGSEDPVSIGGFRGFTRFPIAVGFSGALTLASAFLLTKINPMIVYSSEYAVWGMMLSLFYVSLWMTLKGSSAVRPSALQRGYIHIWLFIVSWGLLIVVAVTEDRLKIASGYPVVFLHSALFLSTVISFLELFGLTKKHDYARRAHDDHQVRDRIGELPHDDALIAPDTPNDEAEDSDGEDSEHEPTETTPLRAGGDSRVRSTFGTAYRSVFTRKSSPDKHKPFENEQPWSGRLPGWTWILQFLLLAPINVILWGQIGLFAVAATQAGGADGGSVLTTYLIIAVLSIVILVPLAPFIHRVHYYVPIILFAAFAGTLIYNLIAFPFSANNRYKIYFVQEIDVSDGSTKVSLTGLDKYVHSVIGELPSTSGKVITCTDSNARSGLVDCSYDGSAVPPLLHGGLENGTVTVTNKRYQHLVSVNITRSNDSKNRATLSINAADSKVCTVIFDQPVSNFAIRGSEGLDSRLGQYPDAGVGSLRLFRRDWTSPWVVDVEWNDQHKVGEVALETDKPVDKDAVEELRKRAGISGTIKCHYSDANVPETIPAFHECLQYSPDWAAFSKADVGLVRPVKRF.

The Cytoplasmic portion of the chain corresponds to 1–11 (MKCHNPFGFRV). Residues 12-32 (GPVTFWTIIIYLALLVPLLWI) form a helical membrane-spanning segment. Residues 33 to 410 (HETVPPAPSS…GFAVFGLRGL (378 aa)) lie on the Vacuolar side of the membrane. Asparagine 50, asparagine 94, and asparagine 130 each carry an N-linked (GlcNAc...) asparagine glycan. The Zn(2+) site is built by histidine 191 and aspartate 203. Glutamate 237 acts as the Proton acceptor in catalysis. 3 residues coordinate Zn(2+): glutamate 238, glutamate 263, and histidine 336. Residues 411–431 (FAWSLTLLIVSPLILAILVFI) traverse the membrane as a helical segment. Over 432–467 (LNRHDKLYFFSRKINVHNEGSEDPVSIGGFRGFTRF) the chain is Cytoplasmic. The chain crosses the membrane as a helical span at residues 468 to 488 (PIAVGFSGALTLASAFLLTKI). Residues 489-491 (NPM) are Vacuolar-facing. Residues 492-512 (IVYSSEYAVWGMMLSLFYVSL) form a helical membrane-spanning segment. Topologically, residues 513–529 (WMTLKGSSAVRPSALQR) are cytoplasmic. Residues 530 to 550 (GYIHIWLFIVSWGLLIVVAVT) traverse the membrane as a helical segment. Residues 551–561 (EDRLKIASGYP) lie on the Vacuolar side of the membrane. The helical transmembrane segment at 562–582 (VVFLHSALFLSTVISFLELFG) threads the bilayer. Topologically, residues 583–690 (LTKKHDYARR…RLPGWTWILQ (108 aa)) are cytoplasmic. The segment at 609–648 (DDALIAPDTPNDEAEDSDGEDSEHEPTETTPLRAGGDSRV) is disordered. Residues 618–631 (PNDEAEDSDGEDSE) show a composition bias toward acidic residues. The chain crosses the membrane as a helical span at residues 691-711 (FLLLAPINVILWGQIGLFAVA). Topologically, residues 712–724 (ATQAGGADGGSVL) are vacuolar. Residues 725-745 (TTYLIIAVLSIVILVPLAPFI) traverse the membrane as a helical segment. At 746 to 750 (HRVHY) the chain is on the cytoplasmic side. Residues 751-771 (YVPIILFAAFAGTLIYNLIAF) traverse the membrane as a helical segment. The Vacuolar portion of the chain corresponds to 772–1020 (PFSANNRYKI…VGLVRPVKRF (249 aa)). 3 N-linked (GlcNAc...) asparagine glycosylation sites follow: asparagine 851, asparagine 868, and asparagine 873.

The protein belongs to the peptidase M28 family. Requires Zn(2+) as cofactor.

It localises to the vacuole membrane. May be involved in vacuolar sorting and osmoregulation. The chain is Vacuolar membrane protease from Verticillium alfalfae (strain VaMs.102 / ATCC MYA-4576 / FGSC 10136) (Verticillium wilt of alfalfa).